Reading from the N-terminus, the 422-residue chain is Tryptophan synthase beta chain 2 (422 aa).

Lysine 111 is subject to N6-(pyridoxal phosphate)lysine.

It belongs to the TrpB family. In terms of assembly, tetramer of two alpha and two beta chains. Pyridoxal 5'-phosphate serves as cofactor.

The enzyme catalyses (1S,2R)-1-C-(indol-3-yl)glycerol 3-phosphate + L-serine = D-glyceraldehyde 3-phosphate + L-tryptophan + H2O. It participates in amino-acid biosynthesis; L-tryptophan biosynthesis; L-tryptophan from chorismate: step 5/5. In terms of biological role, the beta subunit is responsible for the synthesis of L-tryptophan from indole and L-serine. In Thermotoga maritima (strain ATCC 43589 / DSM 3109 / JCM 10099 / NBRC 100826 / MSB8), this protein is Tryptophan synthase beta chain 2 (trpB2).